Here is a 175-residue protein sequence, read N- to C-terminus: Probable RNA-binding protein EIF1AD (175 aa).

The S1-like domain maps to 5-89; it reads TKKRYITNKV…VKGEIEYILD (85 aa). Positions 116–128 are enriched in basic and acidic residues; it reads EAKRGQTSDKMID. The interval 116–175 is disordered; the sequence is EAKRGQTSDKMIDDDMLPPSESEEEDESEGEETYDEDDVDDEEEEEFDTYNPNRMQAPSK. The segment covering 129-163 has biased composition (acidic residues); that stretch reads DDMLPPSESEEEDESEGEETYDEDDVDDEEEEEFD. Residues 165 to 175 show a composition bias toward polar residues; the sequence is YNPNRMQAPSK.

This sequence belongs to the EIF1AD family.

This Caenorhabditis elegans protein is Probable RNA-binding protein EIF1AD.